We begin with the raw amino-acid sequence, 238 residues long: tRNA (guanine-N(7)-)-methyltransferase (238 aa).

4 residues coordinate S-adenosyl-L-methionine: Glu68, Glu93, Asp120, and Asp143. The active site involves Asp143. Residues Lys147, Asp179, and 216-219 (TKFE) each bind substrate.

The protein belongs to the class I-like SAM-binding methyltransferase superfamily. TrmB family.

The enzyme catalyses guanosine(46) in tRNA + S-adenosyl-L-methionine = N(7)-methylguanosine(46) in tRNA + S-adenosyl-L-homocysteine. It functions in the pathway tRNA modification; N(7)-methylguanine-tRNA biosynthesis. In terms of biological role, catalyzes the formation of N(7)-methylguanine at position 46 (m7G46) in tRNA. This is tRNA (guanine-N(7)-)-methyltransferase from Ectopseudomonas mendocina (strain ymp) (Pseudomonas mendocina).